The sequence spans 183 residues: Ribosome rescue factor SmrB (183 aa).

The 76-residue stretch at 98 to 173 (LDLHGLTQLQ…GDAALLVLIE (76 aa)) folds into the Smr domain.

This sequence belongs to the SmrB family. As to quaternary structure, associates with collided ribosomes, but not with correctly translating polysomes.

Its function is as follows. Acts as a ribosome collision sensor. Detects stalled/collided disomes (pairs of ribosomes where the leading ribosome is stalled and a second ribosome has collided with it) and endonucleolytically cleaves mRNA at the 5' boundary of the stalled ribosome. Stalled/collided disomes form a new interface (primarily via the 30S subunits) that binds SmrB. Cleaved mRNA becomes available for tmRNA ligation, leading to ribosomal subunit dissociation and rescue of stalled ribosomes. The sequence is that of Ribosome rescue factor SmrB from Escherichia coli O157:H7.